The primary structure comprises 335 residues: Glycerol-3-phosphate dehydrogenase [NAD(P)+] (335 aa).

NADPH contacts are provided by S15, Y16, H36, and K110. K110, G139, and T141 together coordinate sn-glycerol 3-phosphate. NADPH is bound at residue A143. Sn-glycerol 3-phosphate contacts are provided by K195, D248, S258, R259, and N260. K195 serves as the catalytic Proton acceptor. R259 provides a ligand contact to NADPH. NADPH-binding residues include V283 and E285.

This sequence belongs to the NAD-dependent glycerol-3-phosphate dehydrogenase family.

It localises to the cytoplasm. The catalysed reaction is sn-glycerol 3-phosphate + NAD(+) = dihydroxyacetone phosphate + NADH + H(+). It catalyses the reaction sn-glycerol 3-phosphate + NADP(+) = dihydroxyacetone phosphate + NADPH + H(+). The protein operates within membrane lipid metabolism; glycerophospholipid metabolism. Functionally, catalyzes the reduction of the glycolytic intermediate dihydroxyacetone phosphate (DHAP) to sn-glycerol 3-phosphate (G3P), the key precursor for phospholipid synthesis. This Mannheimia succiniciproducens (strain KCTC 0769BP / MBEL55E) protein is Glycerol-3-phosphate dehydrogenase [NAD(P)+].